A 388-amino-acid polypeptide reads, in one-letter code: Succinate--CoA ligase [ADP-forming] subunit beta (388 aa).

Positions 9–244 (KSLFAEYGLP…PSQDDAREAH (236 aa)) constitute an ATP-grasp domain. ATP-binding positions include lysine 46, 53 to 55 (GRG), glutamate 99, threonine 102, and glutamate 107. 2 residues coordinate Mg(2+): asparagine 199 and aspartate 213. Substrate contacts are provided by residues asparagine 264 and 321–323 (GIV).

Belongs to the succinate/malate CoA ligase beta subunit family. In terms of assembly, heterotetramer of two alpha and two beta subunits. Mg(2+) serves as cofactor.

It catalyses the reaction succinate + ATP + CoA = succinyl-CoA + ADP + phosphate. The enzyme catalyses GTP + succinate + CoA = succinyl-CoA + GDP + phosphate. It participates in carbohydrate metabolism; tricarboxylic acid cycle; succinate from succinyl-CoA (ligase route): step 1/1. Succinyl-CoA synthetase functions in the citric acid cycle (TCA), coupling the hydrolysis of succinyl-CoA to the synthesis of either ATP or GTP and thus represents the only step of substrate-level phosphorylation in the TCA. The beta subunit provides nucleotide specificity of the enzyme and binds the substrate succinate, while the binding sites for coenzyme A and phosphate are found in the alpha subunit. In Shewanella sp. (strain ANA-3), this protein is Succinate--CoA ligase [ADP-forming] subunit beta.